Here is a 386-residue protein sequence, read N- to C-terminus: Methylthioribose-1-phosphate isomerase (386 aa).

D258 (proton donor) is an active-site residue.

The protein belongs to the eIF-2B alpha/beta/delta subunits family. MtnA subfamily.

Its subcellular location is the cytoplasm. It is found in the nucleus. It catalyses the reaction 5-(methylsulfanyl)-alpha-D-ribose 1-phosphate = 5-(methylsulfanyl)-D-ribulose 1-phosphate. The protein operates within amino-acid biosynthesis; L-methionine biosynthesis via salvage pathway; L-methionine from S-methyl-5-thio-alpha-D-ribose 1-phosphate: step 1/6. Functionally, catalyzes the interconversion of methylthioribose-1-phosphate (MTR-1-P) into methylthioribulose-1-phosphate (MTRu-1-P). The chain is Methylthioribose-1-phosphate isomerase from Postia placenta (strain ATCC 44394 / Madison 698-R) (Brown rot fungus).